A 298-amino-acid chain; its full sequence is HTH-type transcriptional regulator TsaR (298 aa).

Residues methionine 1–threonine 58 enclose the HTH lysR-type domain. Positions leucine 18–glutamine 37 form a DNA-binding region, H-T-H motif. Serine 98 and alanine 100 together coordinate toluene-4-sulfonate.

This sequence belongs to the LysR transcriptional regulatory family. In terms of assembly, homotetramer. Dimer of dimers related by a twofold axis.

With respect to regulation, sensitive to oxygen. In terms of biological role, regulates expression of the tsaMBCD1 operon and of tsaT in response to p-toluenesulfonate (TSA). Acts by binding directly to the promoter region. Binding to the tsa promoter depends on TSA concentration. The protein is HTH-type transcriptional regulator TsaR (tsaR) of Comamonas testosteroni (Pseudomonas testosteroni).